Here is a 246-residue protein sequence, read N- to C-terminus: 3'(2'),5'-bisphosphate nucleotidase CysQ (246 aa).

Positions 64, 83, 85, 86, and 205 each coordinate Mg(2+). Glu-64 contributes to the substrate binding site. Substrate-binding positions include Leu-85–Thr-88 and Asp-205.

This sequence belongs to the inositol monophosphatase superfamily. CysQ family. Mg(2+) serves as cofactor.

Its subcellular location is the cell inner membrane. It catalyses the reaction adenosine 3',5'-bisphosphate + H2O = AMP + phosphate. Inhibited by lithium and calcium. Converts adenosine-3',5'-bisphosphate (PAP) to AMP. May also convert adenosine 3'-phosphate 5'-phosphosulfate (PAPS) to adenosine 5'-phosphosulfate (APS). Has 10000-fold lower activity towards inositol 1,4-bisphosphate (Ins(1,4)P2). The sequence is that of 3'(2'),5'-bisphosphate nucleotidase CysQ from Escherichia coli (strain K12).